The sequence spans 347 residues: MSINQQYVSGKSTEVRDVTIIGGGPTGIFAAVQCGMHHINCRIIDSMPSLGGQLTALYPEKHIYDVAGFPEVSAAGLIEQLWSQAARYKPEVVLGDKVVDVKKLDDGSFEVFTEKGHSYFSRAVLIAAGLGAFSPRKLPQLKDFEHLEETSIFYTVSSIDHFKDEKVVVVGGGDSALDWTIALLNVAEHVTLVHRMKEFQAHGKTVADAYEAQETGKLDIYLESEVASVLADSDRLTHAILKTPDEEITIEATRLLPLIGFRSNLGPIKNWGIEISGNGILVDNHMQTTVEGIYAAGDIAVYEGKLKLIQTGLSDAAMAVRHSLRYIKPGEKVKQQFSSQKASEKKA.

8 residues coordinate FAD: threonine 26, aspartate 45, glutamine 53, tyrosine 58, valine 98, phenylalanine 133, aspartate 298, and serine 339.

Belongs to the ferredoxin--NADP reductase type 2 family. In terms of assembly, homodimer. FAD is required as a cofactor.

It carries out the reaction 2 reduced [2Fe-2S]-[ferredoxin] + NADP(+) + H(+) = 2 oxidized [2Fe-2S]-[ferredoxin] + NADPH. The sequence is that of Ferredoxin--NADP reductase 1 from Chloroherpeton thalassium (strain ATCC 35110 / GB-78).